A 149-amino-acid chain; its full sequence is Ribosome-binding factor A (149 aa).

A disordered region spans residues 123–149 (LAKLREGAAPAGDADPYKTSSKSESEE).

The protein belongs to the RbfA family. Monomer. Binds 30S ribosomal subunits, but not 50S ribosomal subunits or 70S ribosomes.

The protein resides in the cytoplasm. Its function is as follows. One of several proteins that assist in the late maturation steps of the functional core of the 30S ribosomal subunit. Associates with free 30S ribosomal subunits (but not with 30S subunits that are part of 70S ribosomes or polysomes). Required for efficient processing of 16S rRNA. May interact with the 5'-terminal helix region of 16S rRNA. The sequence is that of Ribosome-binding factor A from Corynebacterium glutamicum (strain ATCC 13032 / DSM 20300 / JCM 1318 / BCRC 11384 / CCUG 27702 / LMG 3730 / NBRC 12168 / NCIMB 10025 / NRRL B-2784 / 534).